Consider the following 460-residue polypeptide: MLKIYNTLTRQKEEFKPITAGKVGMYVCGVTIYDLCHIGHGRTFVSFDVVSRYLRYLGYDLTFVRNITDIDDKIIKRAAENGETCDSLTERLIGEMHADFDALNMKRPDVEPRATQYIQEIIELVERLIERGFAYVADNGDVMFEVNKFDEYGKLSKQDLDQLQAGARVDVETAKRCPLDFVLWKMSKPGEPTWESPWGPGRPGWHIECSAMNSSILGNHFDIHGGGSDLQFPHHENEIAQSCCAHDTQYVNTWMHSGMVMVDKEKMSKSLGNFFTIRDVLGHYDAETVRYFLMSGHYRSQLNYSEENLNQARASLERLYTSLRGLDFSAAPAGGEEYVSRFTAAMNDDFNTPEAYSVLFDMAREINRLKTEDLANASALGALMRELADVIGILHQDPEAFLKGDAGNDDEVAEIEALIKLRNDSRAAKDWANADMARDKLNEMGIVLEDGPDGTTWRRK.

Residue C28 coordinates Zn(2+). The 'HIGH' region signature appears at V30–H40. 3 residues coordinate Zn(2+): C209, H234, and E238. The 'KMSKS' region motif lies at K266–S270. Residue K269 participates in ATP binding.

The protein belongs to the class-I aminoacyl-tRNA synthetase family. In terms of assembly, monomer. The cofactor is Zn(2+).

The protein localises to the cytoplasm. It carries out the reaction tRNA(Cys) + L-cysteine + ATP = L-cysteinyl-tRNA(Cys) + AMP + diphosphate. This chain is Cysteine--tRNA ligase, found in Vibrio vulnificus (strain YJ016).